A 591-amino-acid chain; its full sequence is Inactive metallocarboxypeptidase ECM14 (591 aa).

Residues 1 to 21 (MRLFSHLAVLAILACAVPITA) form the signal peptide. Residues 22–175 (IPSFLSNSYP…QTIYESYPSS (154 aa)) constitute a propeptide that is removed on maturation. The 321-residue stretch at 203–523 (DYQPFSVIVP…NAVMVLGRFL (321 aa)) folds into the Peptidase M14 domain. H265 and E268 together coordinate Zn(2+). Substrate is bound by residues 265–268 (HARE), R323, and 340–341 (DR). An intrachain disulfide couples C334 to C357. 3 N-linked (GlcNAc...) asparagine glycosylation sites follow: N350, N381, and N386. H397 provides a ligand contact to Zn(2+). 398–399 (SY) lines the substrate pocket. Positions 533 to 591 (DWEDESQRPKADEDDIPSENELDENDDSWIPYDYRNHDDQNEGEGYDNDEWGFRRRRKR) are disordered. Composition is skewed to acidic residues over residues 544–559 (DEDD…ENDD) and 573–582 (NEGEGYDNDE).

The protein belongs to the peptidase M14 family. Zn(2+) is required as a cofactor.

The protein localises to the vacuole. Its subcellular location is the secreted. In terms of biological role, inactive carboxypeptidase that may play a role in cell wall organization and biogenesis. The sequence is that of Inactive metallocarboxypeptidase ECM14 (ECM14) from Paracoccidioides brasiliensis (strain Pb18).